Consider the following 78-residue polypeptide: MATQVPTKVPQDPDPFYYDYDTVQTVGMTLATILFLLGILIILSKKVKCRKADSRSESPTCKSCKSELPSSAPGGGGV.

At 1-22 the chain is on the extracellular side; sequence MATQVPTKVPQDPDPFYYDYDT. O-linked (GlcNAc) threonine glycosylation is found at T3 and T7. Residues 23–43 form a helical membrane-spanning segment; it reads VQTVGMTLATILFLLGILIIL. Over 44-78 the chain is Cytoplasmic; it reads SKKVKCRKADSRSESPTCKSCKSELPSSAPGGGGV. The disordered stretch occupies residues 52 to 78; sequence ADSRSESPTCKSCKSELPSSAPGGGGV. Position 71 is a phosphoserine (S71).

This sequence belongs to the FXYD family. In terms of assembly, regulatory subunit of the sodium/potassium-transporting ATPase which is composed of a catalytic alpha subunit, a non-catalytic beta subunit and an additional regulatory subunit. The regulatory subunit, a member of the FXYD protein family, modulates the enzymatic activity in a tissue- and isoform-specific way by changing affinities of the Na+/K+-ATPase toward Na(+), K(+) or ATP. Post-translationally, O-glycosylated; required for stabilization and translocation to the plasma membrane.

It localises to the cell membrane. Functionally, associates with and regulates the activity of the sodium/potassium-transporting ATPase (NKA) which catalyzes the hydrolysis of ATP coupled with the exchange of Na(+) and K(+) ions across the plasma membrane. Reduces the apparent affinity for external K(+), an effect that depends on the presence of external Na(+) and voltage. Increases the apparent affinity for intracellular Na(+). The protein is FXYD domain-containing ion transport regulator 7 (FXYD7) of Bos taurus (Bovine).